Consider the following 266-residue polypeptide: MAKRLTKQQLTKAIANTLEAPATQSRRPRNRRRRRSAARQPQSTQAGVSMAPIAQGTMVRLREPSLRTAGGVTVLTHSELSTELSVTNAIVITSELVMPYTMGTWLRGVAANWSKYSLLSVRYTYLPSCPSTTSGSIHMGFQYDMADTLPVSVNQLSNLRGYVSGQVWSGSSGLCYINGTRCLDTANAITTTLDVGQLGKKWYPFKTSTDFTTAVGVNVNIATPLVPARLIIAMLDGSSSTAVSTGRLYVSYTIQLIEPTALALNN.

A r domain, interaction with RNA region spans residues 2–71; sequence AKRLTKQQLT…REPSLRTAGG (70 aa). The disordered stretch occupies residues 13-51; it reads AIANTLEAPATQSRRPRNRRRRRSAARQPQSTQAGVSMA. Positions 26-37 are enriched in basic residues; the sequence is RRPRNRRRRRSA. A s domain, virion shell region spans residues 72 to 257; sequence VTVLTHSELS…LYVSYTIQLI (186 aa). Cys-175 and Cys-182 are joined by a disulfide. The p domain, projecting stretch occupies residues 258–266; that stretch reads EPTALALNN.

The protein belongs to the icosahedral plant coat protein family.

The protein resides in the virion. Its function is as follows. Capsid protein self-assembles to form an icosahedral capsid with a T=3 symmetry, about 30 nm in diameter, and consisting of 180 capsid proteins. Each icosahedral unit contains three protein subunits (Potential). The polypeptide is Capsid protein (Southern bean mosaic virus (isolate Bean/United States/Arkansas) (SBMV)).